The following is a 430-amino-acid chain: tRNA(Ile)-lysidine synthase (430 aa).

Ser21–Ser26 contacts ATP.

It belongs to the tRNA(Ile)-lysidine synthase family.

Its subcellular location is the cytoplasm. The enzyme catalyses cytidine(34) in tRNA(Ile2) + L-lysine + ATP = lysidine(34) in tRNA(Ile2) + AMP + diphosphate + H(+). Its function is as follows. Ligates lysine onto the cytidine present at position 34 of the AUA codon-specific tRNA(Ile) that contains the anticodon CAU, in an ATP-dependent manner. Cytidine is converted to lysidine, thus changing the amino acid specificity of the tRNA from methionine to isoleucine. This is tRNA(Ile)-lysidine synthase from Salmonella dublin (strain CT_02021853).